Reading from the N-terminus, the 281-residue chain is LC-AMP precursor 3 (281 aa).

A signal peptide spans 1 to 19; sequence MKYTIIPFLLLVALTCATA. Positions 20–56 are excised as a propeptide; sequence RSIDGSEKEVQEIREETPSSNEDVPFSLSANEDEEAR. Leucine 74 carries the leucine amide modification. The propeptide occupies 75 to 89; it reads GREESLSANEDEEAR. Serine 114 is subject to Serine amide. Residues 115-129 constitute a propeptide that is removed on maturation; the sequence is GREESFSANEDEEER. Leucine 147 carries the leucine amide modification. Residues 148 to 162 constitute a propeptide that is removed on maturation; the sequence is GREESISANEDEETR. Leucine amide is present on leucine 180. The propeptide occupies 181 to 195; the sequence is GREESLSAIEDEEAR. Residue leucine 213 is modified to Leucine amide. The propeptide occupies 214 to 228; that stretch reads GREESLSANEDEEAR. Leucine 246 is modified (leucine amide). Positions 247-261 are excised as a propeptide; that stretch reads GREESLSANEDEEAR. Position 279 is a leucine amide (leucine 279).

In terms of tissue distribution, expressed by the venom gland.

The protein resides in the secreted. Functionally, antimicrobial peptide that acts by influencing bacterial cell membrane permeability at low concentrations and by directly disrupting structure-function at high concentrations. Shows activity against Gram-negative bacteria (S.typhimurium CGMCC 1.1174 (MIC=2.5 uM), E.coli CCTCC AB 2018675 (MIC=5 uM), S.dysenteriae CGMCC 1.1869 (MIC=2.5 uM), P.aeruginosa CGMCC 1.596 (MIC 5-10 uM), K.pneumoniae (MIC=10 uM), A.baumannii (MIC=5-10 uM)), and Gram-positive bacteria (S.aureus CMCC 26003 or MRSA ATCC 43300 (MIC=5 uM), and E.faecium (MIC=2.5-5 uM)). Inhibits biofilm formation of E.coli and S.aureus in a dose-dependent manner and disrupts established biofilms. Demonstrates minimal bacterial resistance, excellent stability, negligible mammalian cell toxicity, low hemolytic activity, and appropriate selectivity for both normal and tumor cells. When combined with traditional antibiotics, exhibits additive or synergistic therapeutic effects. In vivo, in a neutropenic mouse thigh infection model, exhibits a therapeutic effect in inhibiting bacterial proliferation. This chain is LC-AMP precursor 3, found in Lycosa coelestis (Wolf spider).